A 294-amino-acid polypeptide reads, in one-letter code: G-protein coupled receptor homolog U51 (294 aa).

The Extracellular segment spans residues 1-14; it reads MKNIDLTNWKLLAE. Residues 15–35 traverse the membrane as a helical segment; the sequence is IYEYLFFFSFFFLCLLVIIVV. Topologically, residues 36-47 are cytoplasmic; the sequence is KFNNSTVGREYT. The helical transmembrane segment at 48 to 68 threads the bilayer; sequence FSTFSGMLVYILLLPVKMGML. At 69–79 the chain is on the extracellular side; the sequence is TKMWDVSTDYC. The chain crosses the membrane as a helical span at residues 80–102; it reads IILMFLSDFSFIFSSWALTLLAL. Topologically, residues 103–119 are cytoplasmic; sequence ERINNFSFSEIKVNETK. The helical transmembrane segment at 120 to 140 threads the bilayer; sequence ILKQMSFPIIWVTSIFQAVQI. At 141–166 the chain is on the extracellular side; the sequence is SMKYKKSQMNLEDDYCLLAIERSAEE. The helical transmembrane segment at 167 to 187 threads the bilayer; the sequence is AWILLMYTVVIPTFIVFFYVL. Residues 188–200 lie on the Cytoplasmic side of the membrane; the sequence is NKRFLFLERDLNS. Residues 201-221 traverse the membrane as a helical segment; it reads IVTHLSLFLFFGALCFFPASV. The Extracellular portion of the chain corresponds to 222-236; sequence LNEFNCNRLFYGLHE. The helical transmembrane segment at 237–257 threads the bilayer; it reads LLIVCLELKIFYVPTMTYIIS. Topologically, residues 258–294 are cytoplasmic; sequence CENYRLAAKAFFCKCFKPCFLMPSLRKLQQPTKSTQF.

It belongs to the G-protein coupled receptor 1 family.

Its subcellular location is the host cell membrane. The polypeptide is G-protein coupled receptor homolog U51 (U51) (Human herpesvirus 7 (strain JI) (HHV-7)).